The primary structure comprises 384 residues: Cytochrome b (384 aa).

4 helical membrane-spanning segments follow: residues 32-52 (FGFL…FLAI), 76-98 (WLLR…IHIS), 113-133 (TWVV…MGYV), and 179-199 (FFSF…VHMA). Heme b is bound by residues H82 and H96. Heme b-binding residues include H183 and H197. Position 202 (H202) interacts with a ubiquinone. A run of 4 helical transmembrane segments spans residues 225-245 (FIIK…LFVY), 289-309 (LGGV…PWIT), 321-341 (LYKK…WIGG), and 348-368 (YVVI…IFIP).

It belongs to the cytochrome b family. The main subunits of complex b-c1 are: cytochrome b, cytochrome c1 and the Rieske protein. The cofactor is heme b.

The protein localises to the mitochondrion inner membrane. Component of the ubiquinol-cytochrome c reductase complex (complex III or cytochrome b-c1 complex) that is part of the mitochondrial respiratory chain. The b-c1 complex mediates electron transfer from ubiquinol to cytochrome c. Contributes to the generation of a proton gradient across the mitochondrial membrane that is then used for ATP synthesis. The polypeptide is Cytochrome b (MT-CYB) (Cyanidium caldarium (Red alga)).